The chain runs to 260 residues: Proteasome subunit alpha (260 aa).

A disordered region spans residues 241 to 260 (VEEEEVKEKEEDYSELDSHY).

The protein belongs to the peptidase T1A family. As to quaternary structure, the 20S proteasome core is composed of 14 alpha and 14 beta subunits that assemble into four stacked heptameric rings, resulting in a barrel-shaped structure. The two inner rings, each composed of seven catalytic beta subunits, are sandwiched by two outer rings, each composed of seven alpha subunits. The catalytic chamber with the active sites is on the inside of the barrel. Has a gated structure, the ends of the cylinder being occluded by the N-termini of the alpha-subunits. Is capped at one or both ends by the proteasome regulatory ATPase, PAN.

It localises to the cytoplasm. With respect to regulation, the formation of the proteasomal ATPase PAN-20S proteasome complex, via the docking of the C-termini of PAN into the intersubunit pockets in the alpha-rings, triggers opening of the gate for substrate entry. Interconversion between the open-gate and close-gate conformations leads to a dynamic regulation of the 20S proteasome proteolysis activity. Component of the proteasome core, a large protease complex with broad specificity involved in protein degradation. The sequence is that of Proteasome subunit alpha from Pyrococcus horikoshii (strain ATCC 700860 / DSM 12428 / JCM 9974 / NBRC 100139 / OT-3).